The following is a 110-amino-acid chain: Large ribosomal subunit protein uL22 (110 aa).

Belongs to the universal ribosomal protein uL22 family. Part of the 50S ribosomal subunit.

In terms of biological role, this protein binds specifically to 23S rRNA; its binding is stimulated by other ribosomal proteins, e.g. L4, L17, and L20. It is important during the early stages of 50S assembly. It makes multiple contacts with different domains of the 23S rRNA in the assembled 50S subunit and ribosome. Its function is as follows. The globular domain of the protein is located near the polypeptide exit tunnel on the outside of the subunit, while an extended beta-hairpin is found that lines the wall of the exit tunnel in the center of the 70S ribosome. The protein is Large ribosomal subunit protein uL22 of Actinobacillus pleuropneumoniae serotype 5b (strain L20).